The primary structure comprises 625 residues: Probable potassium transport system protein Kup (625 aa).

A run of 12 helical transmembrane segments spans residues 10–30 (LAAL…TSPL), 50–70 (LLGV…LKYV), 102–122 (YFPL…DSVI), 142–162 (FDPY…SVQA), 172–192 (FGPI…VNII), 215–235 (FLAF…EALY), 250–270 (WFLV…ALLL), 284–304 (LGAW…IIAS), 340–360 (IYIP…VVGF), 369–389 (AYGI…FFVI), 397–417 (LLLC…LFSA), and 422–442 (LFHG…LMLT).

It belongs to the HAK/KUP transporter (TC 2.A.72) family.

Its subcellular location is the cell inner membrane. The catalysed reaction is K(+)(in) + H(+)(in) = K(+)(out) + H(+)(out). In terms of biological role, transport of potassium into the cell. Likely operates as a K(+):H(+) symporter. The polypeptide is Probable potassium transport system protein Kup (Janthinobacterium sp. (strain Marseille) (Minibacterium massiliensis)).